The following is a 454-amino-acid chain: Venom prothrombin activator porpharin-D (454 aa).

Positions 1-20 (MAPQLLLCLILTFLWSLPEA) are cleaved as a signal peptide. Residues 21-40 (ESNVFLKSKEANRFLQRTKR) constitute a propeptide that is removed on maturation. The Gla domain occupies 41–86 (SNSLFEEFRPGNIERECIEEKCSKEEAREIFKDNEKTEAFWNVYVD). Residues Glu-46, Glu-47, Glu-54, Glu-56, Glu-59, Glu-60, Glu-65, Glu-66, Glu-69, and Glu-75 each carry the 4-carboxyglutamate modification. A disulfide bond links Cys-57 and Cys-62. In terms of domain architecture, EGF-like 1; calcium-binding spans 86 to 122 (DGDQCSSNPCHYGGTCKDGIGSYTCTCLPNYEGKNCE). Intrachain disulfides connect Cys-90–Cys-101, Cys-95–Cys-110, Cys-112–Cys-121, Cys-129–Cys-140, Cys-136–Cys-149, Cys-151–Cys-164, Cys-172–Cys-316, Cys-216–Cys-221, Cys-236–Cys-252, Cys-364–Cys-378, and Cys-389–Cys-417. O-linked (Hex...) serine glycosylation is present at Ser-92. Residues 129–164 (CRFFNGNCWHFCKPVQNDTQCSCAESYRLGDDGHSC) enclose the EGF-like 2 domain. A propeptide spans 182-209 (REASLPDFVQSQNATLLKKSDNPSPDIR) (activation peptide). One can recognise a Peptidase S1 domain in the interval 210-441 (IINGMDCKLG…FIPWIKAVMR (232 aa)). Residues His-251 and Asp-296 each act as charge relay system in the active site. Residue Ser-393 is the Charge relay system of the active site.

It belongs to the peptidase S1 family. Snake venom subfamily. In terms of assembly, heterodimer of a light chain and a heavy chain; disulfide-linked. In terms of processing, the vitamin K-dependent, enzymatic carboxylation of some glutamate residues allows the modified protein to bind calcium. In terms of tissue distribution, expressed by the venom gland.

The protein localises to the secreted. It carries out the reaction Selective cleavage of Arg-|-Thr and then Arg-|-Ile bonds in prothrombin to form thrombin.. Its function is as follows. Snake prothrombin activator that attacks the hemostatic system of prey. This protein is functionally similar to blood coagulation factor Xa. This is Venom prothrombin activator porpharin-D from Pseudechis porphyriacus (Red-bellied black snake).